Consider the following 407-residue polypeptide: Imidazolonepropionase (407 aa).

Residues H73 and H75 each coordinate Fe(3+). The Zn(2+) site is built by H73 and H75. The 4-imidazolone-5-propanoate site is built by R82, Y145, and H178. An N-formimidoyl-L-glutamate-binding site is contributed by Y145. Residue H243 participates in Fe(3+) binding. Position 243 (H243) interacts with Zn(2+). Residue Q246 coordinates 4-imidazolone-5-propanoate. D318 contacts Fe(3+). D318 serves as a coordination point for Zn(2+). Positions 320 and 322 each coordinate N-formimidoyl-L-glutamate. T323 is a binding site for 4-imidazolone-5-propanoate.

Belongs to the metallo-dependent hydrolases superfamily. HutI family. Zn(2+) serves as cofactor. It depends on Fe(3+) as a cofactor.

The protein resides in the cytoplasm. It catalyses the reaction 4-imidazolone-5-propanoate + H2O = N-formimidoyl-L-glutamate. The protein operates within amino-acid degradation; L-histidine degradation into L-glutamate; N-formimidoyl-L-glutamate from L-histidine: step 3/3. Catalyzes the hydrolytic cleavage of the carbon-nitrogen bond in imidazolone-5-propanoate to yield N-formimidoyl-L-glutamate. It is the third step in the universal histidine degradation pathway. This is Imidazolonepropionase from Serratia proteamaculans (strain 568).